The chain runs to 59 residues: MKILSVLLLALIICSIVGWSEAQFTNVSCTTSKECWSVCQRLHNTSRGKCMNKKCRCYS.

The first 22 residues, 1–22 (MKILSVLLLALIICSIVGWSEA), serve as a signal peptide directing secretion. Gln23 is subject to Pyrrolidone carboxylic acid. 3 disulfides stabilise this stretch: Cys29/Cys50, Cys35/Cys55, and Cys39/Cys57. Residues 48–55 (GKCMNKKC) form an interaction with Ca(2+)-activated K(+) channels region.

The protein belongs to the short scorpion toxin superfamily. Potassium channel inhibitor family. Alpha-KTx 01 subfamily. As to expression, expressed by the venom gland.

It is found in the secreted. Functionally, this toxin inhibits numerous potassium channels: shaker (Ki=227 nM), Kv1.2/KCNA2 (nanomolar range), Kv1.3/KCNA3 (nanomolar range), Kv1.5/KCNA5 (Kd&gt;100 nM), Kv1.6/KCNA6 (Ki=22 nM), KCa1.1/KCNMA1 (IC(50)=5.9 nM). It blocks channel activity by a simple bimolecular inhibition process. It also shows a weak interaction with nicotinic acetylcholine receptors (nAChR), suggesting it may weakly inhibit it. It also exhibits pH-specific antimicrobial activities against bacteria (B.subtilis, E.coli and S.aureus) and the fungus C.albicans. The sequence is that of Potassium channel toxin alpha-KTx 1.1 from Leiurus hebraeus (Hebrew deathstalker scorpion).